The following is an 83-amino-acid chain: Cytochrome b559 subunit alpha (83 aa).

Residues 21 to 35 traverse the membrane as a helical segment; the sequence is VIHSITVPSLFIAGW. His-23 serves as a coordination point for heme.

Belongs to the PsbE/PsbF family. In terms of assembly, heterodimer of an alpha subunit and a beta subunit. PSII is composed of 1 copy each of membrane proteins PsbA, PsbB, PsbC, PsbD, PsbE, PsbF, PsbH, PsbI, PsbJ, PsbK, PsbL, PsbM, PsbT, PsbX, PsbY, PsbZ, Psb30/Ycf12, at least 3 peripheral proteins of the oxygen-evolving complex and a large number of cofactors. It forms dimeric complexes. It depends on heme b as a cofactor.

It localises to the plastid. It is found in the chloroplast thylakoid membrane. This b-type cytochrome is tightly associated with the reaction center of photosystem II (PSII). PSII is a light-driven water:plastoquinone oxidoreductase that uses light energy to abstract electrons from H(2)O, generating O(2) and a proton gradient subsequently used for ATP formation. It consists of a core antenna complex that captures photons, and an electron transfer chain that converts photonic excitation into a charge separation. The protein is Cytochrome b559 subunit alpha of Oltmannsiellopsis viridis (Marine flagellate).